The following is a 215-amino-acid chain: ATP phosphoribosyltransferase (215 aa).

Belongs to the ATP phosphoribosyltransferase family. Short subfamily. Heteromultimer composed of HisG and HisZ subunits.

The protein localises to the cytoplasm. It carries out the reaction 1-(5-phospho-beta-D-ribosyl)-ATP + diphosphate = 5-phospho-alpha-D-ribose 1-diphosphate + ATP. The protein operates within amino-acid biosynthesis; L-histidine biosynthesis; L-histidine from 5-phospho-alpha-D-ribose 1-diphosphate: step 1/9. Its function is as follows. Catalyzes the condensation of ATP and 5-phosphoribose 1-diphosphate to form N'-(5'-phosphoribosyl)-ATP (PR-ATP). Has a crucial role in the pathway because the rate of histidine biosynthesis seems to be controlled primarily by regulation of HisG enzymatic activity. The protein is ATP phosphoribosyltransferase of Gloeothece citriformis (strain PCC 7424) (Cyanothece sp. (strain PCC 7424)).